Consider the following 144-residue polypeptide: MEQTFAYYTTIFREDFTLFCKSELQKEGISLGLLYFVIYIGKKPGCSQRELAAAVRADEGYAARSVEKLLQDGFIERRRHEKDKRMAILTLTMKGEKTFEKAHSLFHEWDDKVLSSLQEEEKKQLFTLLQKLGKTKEAHLCMKK.

The HTH marR-type domain maps to 1 to 134 (MEQTFAYYTT…LFTLLQKLGK (134 aa)). The segment at residues 48 to 71 (QRELAAAVRADEGYAARSVEKLLQ) is a DNA-binding region (H-T-H motif).

Its function is as follows. Transcription regulator that regulates expression of the bilirubin reductase operon (bilQ, bilR and bilS). The sequence is that of HTH-type transcriptional regulator BilQ from Clostridium symbiosum (strain WAL-14163).